Reading from the N-terminus, the 491-residue chain is Cobyric acid synthase (491 aa).

Residues 249–439 form the GATase cobBQ-type domain; the sequence is PIDIAVIKLP…IHGVFDGVEF (191 aa). The Nucleophile role is filled by Cys-329. His-431 is a catalytic residue.

This sequence belongs to the CobB/CobQ family. CobQ subfamily.

It participates in cofactor biosynthesis; adenosylcobalamin biosynthesis. Catalyzes amidations at positions B, D, E, and G on adenosylcobyrinic A,C-diamide. NH(2) groups are provided by glutamine, and one molecule of ATP is hydrogenolyzed for each amidation. This chain is Cobyric acid synthase, found in Clostridium tetani (strain Massachusetts / E88).